The chain runs to 898 residues: Serine/threonine-protein kinase TAO3 (898 aa).

The region spanning 24 to 277 is the Protein kinase domain; that stretch reads FIGLHEIGHG…SAELLRHDFV (254 aa). ATP-binding positions include 30 to 38 and Lys-53; that span reads IGHGSFGAV. Catalysis depends on Asp-147, which acts as the Proton acceptor. Disordered regions lie at residues 316-362 and 405-425; these read TRNG…SQSS and DEAG…VQSQ. Ser-324 is modified (phosphoserine; by ATM). A phosphoserine mark is found at Ser-331, Ser-343, Ser-346, and Ser-349. Over residues 334–351 the composition is skewed to polar residues; that stretch reads GTSLNREMDSLGSNHSIP. The segment covering 352–362 has biased composition (low complexity); the sequence is SMSVSTGSQSS. Position 357 is a phosphothreonine (Thr-357). Position 359 is a phosphoserine (Ser-359). Positions 405–416 are enriched in basic and acidic residues; the sequence is DEAGHGDPRPEP. At Ser-442 the chain carries Phosphoserine. 3 coiled-coil regions span residues 452-502, 548-649, and 754-879; these read EQEN…THAN, FLES…HAML, and LKTL…DMES. Positions 565–596 are disordered; the sequence is EEMNEDHSTPKKEKQERISKHKENLQHTQAEE. Residue Lys-830 is modified to N6-acetyllysine.

Belongs to the protein kinase superfamily. STE Ser/Thr protein kinase family. STE20 subfamily. As to quaternary structure, self-associates. Interacts with ERN1 and TRAF2. Interaction with TRAF2 is facilitated under ER stress conditions, such as treatment with tunicamycin, and may promote TRAF2 phosphorylation. Interacts (via N-terminus) with STK25; the interaction promotes STK25 abundance at the level of protein expression and/or stability. (Microbial infection) Interacts with herpes simplex virus 1 UL37 protein. In terms of processing, autophosphorylated. Phosphorylation at Ser-324 by ATM following DNA damage is required for activation of the p38/MAPK14 stress-activated MAPK cascade. Phosphorylated at Ser-324 and on Tyr residues during T cell activation. Phosphorylated by LRRK2. As to expression, ubiquitously expressed at a low level, and highly expressed in peripheral blood leukocytes (PBLs), thymus, spleen, kidney, skeletal muscle, heart and liver.

It is found in the cytoplasm. Its subcellular location is the cell membrane. It localises to the membrane raft. The protein localises to the lipid droplet. It carries out the reaction L-seryl-[protein] + ATP = O-phospho-L-seryl-[protein] + ADP + H(+). It catalyses the reaction L-threonyl-[protein] + ATP = O-phospho-L-threonyl-[protein] + ADP + H(+). Its function is as follows. Serine/threonine-protein kinase that acts as a regulator of the p38/MAPK14 stress-activated MAPK cascade and of the MAPK8/JNK cascade. In response to DNA damage, involved in the G2/M transition DNA damage checkpoint by activating the p38/MAPK14 stress-activated MAPK cascade, probably by mediating phosphorylation of upstream MAP2K3 and MAP2K6 kinases. Inhibits basal activity of the MAPK8/JNK cascade and diminishes its activation in response to epidermal growth factor (EGF). Positively regulates canonical T cell receptor (TCR) signaling by preventing early PTPN6/SHP1-mediated inactivation of LCK, ensuring sustained TCR signaling that is required for optimal activation and differentiation of T cells. Phosphorylates PTPN6/SHP1 on 'Thr-394', leading to its polyubiquitination and subsequent proteasomal degradation. Required for cell surface expression of metalloprotease ADAM10 on type 1 transitional B cells which is necessary for their NOTCH-mediated development into marginal zone B cells. Also required for the NOTCH-mediated terminal differentiation of splenic conventional type 2 dendritic cells. Positively regulates osteoblast differentiation by acting as an upstream activator of the JNK pathway. Promotes JNK signaling in hepatocytes and positively regulates hepatocyte lipid storage by inhibiting beta-oxidation and triacylglycerol secretion while enhancing lipid synthesis. Restricts age-associated inflammation by negatively regulating differentiation of macrophages and their production of pro-inflammatory cytokines. Plays a role in negatively regulating the abundance of regulatory T cells in white adipose tissue. In Homo sapiens (Human), this protein is Serine/threonine-protein kinase TAO3 (TAOK3).